The primary structure comprises 110 residues: T cell receptor alpha variable 22 (110 aa).

The N-terminal stretch at 1-21 (MKRILGALLGLLSAQVCCVRG) is a signal peptide. The region spanning 22–110 (IQVEQSPPDL…DSGVYFCAVE (89 aa)) is the Ig-like domain. N38 and N44 each carry an N-linked (GlcNAc...) asparagine glycan. A disulfide bridge links C43 with C107.

As to quaternary structure, alpha-beta TR is a heterodimer composed of an alpha and beta chain; disulfide-linked. The alpha-beta TR is associated with the transmembrane signaling CD3 coreceptor proteins to form the TR-CD3 (TcR or TCR). The assembly of alpha-beta TR heterodimers with CD3 occurs in the endoplasmic reticulum where a single alpha-beta TR heterodimer associates with one CD3D-CD3E heterodimer, one CD3G-CD3E heterodimer and one CD247 homodimer forming a stable octameric structure. CD3D-CD3E and CD3G-CD3E heterodimers preferentially associate with TR alpha and TR beta chains, respectively. The association of the CD247 homodimer is the last step of TcR assembly in the endoplasmic reticulum and is required for transport to the cell surface.

It is found in the cell membrane. V region of the variable domain of T cell receptor (TR) alpha chain that participates in the antigen recognition. Alpha-beta T cell receptors are antigen specific receptors which are essential to the immune response and are present on the cell surface of T lymphocytes. Recognize peptide-major histocompatibility (MH) (pMH) complexes that are displayed by antigen presenting cells (APC), a prerequisite for efficient T cell adaptive immunity against pathogens. Binding of alpha-beta TR to pMH complex initiates TR-CD3 clustering on the cell surface and intracellular activation of LCK that phosphorylates the ITAM motifs of CD3G, CD3D, CD3E and CD247 enabling the recruitment of ZAP70. In turn ZAP70 phosphorylates LAT, which recruits numerous signaling molecules to form the LAT signalosome. The LAT signalosome propagates signal branching to three major signaling pathways, the calcium, the mitogen-activated protein kinase (MAPK) kinase and the nuclear factor NF-kappa-B (NF-kB) pathways, leading to the mobilization of transcription factors that are critical for gene expression and essential for T cell growth and differentiation. The T cell repertoire is generated in the thymus, by V-(D)-J rearrangement. This repertoire is then shaped by intrathymic selection events to generate a peripheral T cell pool of self-MH restricted, non-autoaggressive T cells. Post-thymic interaction of alpha-beta TR with the pMH complexes shapes TR structural and functional avidity. The protein is T cell receptor alpha variable 22 of Homo sapiens (Human).